The chain runs to 419 residues: UDP-N-acetylglucosamine 1-carboxyvinyltransferase (419 aa).

22–23 (KN) contacts phosphoenolpyruvate. Arg-91 lines the UDP-N-acetyl-alpha-D-glucosamine pocket. The active-site Proton donor is Cys-115. Cys-115 is modified (2-(S-cysteinyl)pyruvic acid O-phosphothioketal). Residues 120-124 (RPVDL), 160-163 (KVSV), Asp-305, and Val-327 contribute to the UDP-N-acetyl-alpha-D-glucosamine site.

This sequence belongs to the EPSP synthase family. MurA subfamily.

Its subcellular location is the cytoplasm. It carries out the reaction phosphoenolpyruvate + UDP-N-acetyl-alpha-D-glucosamine = UDP-N-acetyl-3-O-(1-carboxyvinyl)-alpha-D-glucosamine + phosphate. The protein operates within cell wall biogenesis; peptidoglycan biosynthesis. Cell wall formation. Adds enolpyruvyl to UDP-N-acetylglucosamine. This chain is UDP-N-acetylglucosamine 1-carboxyvinyltransferase, found in Shigella sonnei (strain Ss046).